Here is a 159-residue protein sequence, read N- to C-terminus: Ubiquitin-conjugating enzyme E2 variant 1B (159 aa).

The region spanning 11 to 159 (PRNFRLLEEL…KGLVVKCCVM (149 aa)) is the UBC core domain.

The protein belongs to the ubiquitin-conjugating enzyme family. As to quaternary structure, heterodimer with UBC35 or UBC36. As to expression, expressed in roots, shoots, leaves, stems and flowers, but not in pollen.

Its function is as follows. Has no ubiquitin ligase activity on its own. The heterodimer with UBC catalyzes the synthesis of non-canonical poly-ubiquitin chains that are linked through 'Lys-63'. This type of poly-ubiquitination does not lead to protein degradation by the proteasome. Mediates transcriptional activation of target genes. May play a role in the control of progress through the cell cycle and differentiation. May play a role in the error-free DNA repair pathway and contributes to the survival of cells after DNA damage. In Arabidopsis thaliana (Mouse-ear cress), this protein is Ubiquitin-conjugating enzyme E2 variant 1B (UEV1B).